The chain runs to 482 residues: UDP-glycosyltransferase 86A2 (482 aa).

UDP-alpha-D-glucose contacts are provided by residues S297, 355-357 (CCQ), 372-380 (HCGWNSILE), and 394-397 (LTDQ).

The protein belongs to the UDP-glycosyltransferase family.

This Arabidopsis thaliana (Mouse-ear cress) protein is UDP-glycosyltransferase 86A2 (UGT86A2).